We begin with the raw amino-acid sequence, 171 residues long: Auxin-responsive protein IAA33 (171 aa).

2 stretches are compositionally biased toward polar residues: residues 1–11 and 19–32; these read MNSFEPQSQDS and DNST…TTTP. A disordered region spans residues 1-51; sequence MNSFEPQSQDSLQRRFHQDNSTTQQPRDTTTPFIPKPASKNHNNSNSSSGA. Positions 40–49 are enriched in low complexity; it reads KNHNNSNSSS. The region spanning 72–162 is the PB1 domain; it reads VPPVTVVLEG…KRIRILPVKG (91 aa).

Belongs to the Aux/IAA family. In terms of assembly, homodimers and heterodimers.

The protein resides in the nucleus. In terms of biological role, aux/IAA proteins are short-lived transcriptional factors that function as repressors of early auxin response genes at low auxin concentrations. Repression is thought to result from the interaction with auxin response factors (ARFs), proteins that bind to the auxin-responsive promoter element (AuxRE). Formation of heterodimers with ARF proteins may alter their ability to modulate early auxin response genes expression. This is Auxin-responsive protein IAA33 (IAA33) from Arabidopsis thaliana (Mouse-ear cress).